The following is a 421-amino-acid chain: Glucose-1-phosphate adenylyltransferase (421 aa).

Residues Y108, G173, 188 to 189 (EK), and S206 each bind alpha-D-glucose 1-phosphate.

This sequence belongs to the bacterial/plant glucose-1-phosphate adenylyltransferase family. In terms of assembly, homotetramer.

The enzyme catalyses alpha-D-glucose 1-phosphate + ATP + H(+) = ADP-alpha-D-glucose + diphosphate. The protein operates within glycan biosynthesis; glycogen biosynthesis. Its function is as follows. Involved in the biosynthesis of ADP-glucose, a building block required for the elongation reactions to produce glycogen. Catalyzes the reaction between ATP and alpha-D-glucose 1-phosphate (G1P) to produce pyrophosphate and ADP-Glc. This chain is Glucose-1-phosphate adenylyltransferase, found in Mesorhizobium japonicum (strain LMG 29417 / CECT 9101 / MAFF 303099) (Mesorhizobium loti (strain MAFF 303099)).